The primary structure comprises 1597 residues: Pentafunctional AROM polypeptide (1597 aa).

Positions 1–384 are 3-dehydroquinate synthase; the sequence is MGVPTKISIL…HEPRASTVSN (384 aa). Residues 44-46, 81-84, 114-116, and D119 contribute to the NAD(+) site; these read DTN, ESSK, and GGV. R130 contacts 7-phospho-2-dehydro-3-deoxy-D-arabino-heptonate. 139–140 contacts NAD(+); sequence TT. Positions 146 and 152 each coordinate 7-phospho-2-dehydro-3-deoxy-D-arabino-heptonate. NAD(+) is bound at residue K161. Residue N162 coordinates 7-phospho-2-dehydro-3-deoxy-D-arabino-heptonate. NAD(+) is bound by residues 179–182 and N190; that span reads FLNT. E194 lines the Zn(2+) pocket. 7-phospho-2-dehydro-3-deoxy-D-arabino-heptonate is bound by residues 194 to 197 and K250; that span reads EVIK. The Proton acceptor; for 3-dehydroquinate synthase activity role is filled by E260. 7-phospho-2-dehydro-3-deoxy-D-arabino-heptonate is bound by residues 264-268 and H271; that span reads RNLLN. Zn(2+) is bound at residue H271. H275 functions as the Proton acceptor; for 3-dehydroquinate synthase activity in the catalytic mechanism. Residues H287 and K356 each contribute to the 7-phospho-2-dehydro-3-deoxy-D-arabino-heptonate site. H287 contacts Zn(2+). The segment at 397-842 is EPSP synthase; it reads VSPGVPKNLN…WDSLAQTFKV (446 aa). C824 acts as the For EPSP synthase activity in catalysis. Residues 866–1057 are shikimate kinase; that stretch reads ASIFIIGMRG…RSKENTFFVS (192 aa). 872–879 contributes to the ATP binding site; the sequence is GMRGAGKT. The 3-dehydroquinase stretch occupies residues 1058–1278; the sequence is LTLPDLAPAA…AAPGQLSARE (221 aa). Residue H1181 is the Proton acceptor; for 3-dehydroquinate dehydratase activity of the active site. The Schiff-base intermediate with substrate; for 3-dehydroquinate dehydratase activity role is filled by K1209. A shikimate dehydrogenase region spans residues 1291–1597; it reads SKKFAVIGNP…VQPKDDDIST (307 aa).

This sequence in the N-terminal section; belongs to the sugar phosphate cyclases superfamily. Dehydroquinate synthase family. It in the 2nd section; belongs to the EPSP synthase family. In the 3rd section; belongs to the shikimate kinase family. The protein in the 4th section; belongs to the type-I 3-dehydroquinase family. This sequence in the C-terminal section; belongs to the shikimate dehydrogenase family. Homodimer. The cofactor is Zn(2+).

The protein resides in the cytoplasm. It carries out the reaction 7-phospho-2-dehydro-3-deoxy-D-arabino-heptonate = 3-dehydroquinate + phosphate. The enzyme catalyses 3-dehydroquinate = 3-dehydroshikimate + H2O. The catalysed reaction is shikimate + NADP(+) = 3-dehydroshikimate + NADPH + H(+). It catalyses the reaction shikimate + ATP = 3-phosphoshikimate + ADP + H(+). It carries out the reaction 3-phosphoshikimate + phosphoenolpyruvate = 5-O-(1-carboxyvinyl)-3-phosphoshikimate + phosphate. The protein operates within metabolic intermediate biosynthesis; chorismate biosynthesis; chorismate from D-erythrose 4-phosphate and phosphoenolpyruvate: step 2/7. It participates in metabolic intermediate biosynthesis; chorismate biosynthesis; chorismate from D-erythrose 4-phosphate and phosphoenolpyruvate: step 3/7. Its pathway is metabolic intermediate biosynthesis; chorismate biosynthesis; chorismate from D-erythrose 4-phosphate and phosphoenolpyruvate: step 4/7. It functions in the pathway metabolic intermediate biosynthesis; chorismate biosynthesis; chorismate from D-erythrose 4-phosphate and phosphoenolpyruvate: step 5/7. The protein operates within metabolic intermediate biosynthesis; chorismate biosynthesis; chorismate from D-erythrose 4-phosphate and phosphoenolpyruvate: step 6/7. In terms of biological role, the AROM polypeptide catalyzes 5 consecutive enzymatic reactions in prechorismate polyaromatic amino acid biosynthesis. This Blastomyces gilchristii (strain SLH14081) (Blastomyces dermatitidis) protein is Pentafunctional AROM polypeptide.